We begin with the raw amino-acid sequence, 296 residues long: Iron(3+)-hydroxamate-binding protein FhuD (296 aa).

Residues 1-30 constitute a signal peptide (tat-type signal); sequence MSGLPLISRRRLLTAMALSPLLWQMNTAHA. The region spanning 37–296 is the Fe/B12 periplasmic-binding domain; the sequence is RIVALEWLPV…VLDNAIGGKA (260 aa). Residues W68, R84, S103, Y106, F124, W217, W273, F274, and Y275 each coordinate Fe(III)-coprogen.

Belongs to the bacterial solute-binding protein 8 family. In terms of assembly, the complex is composed of two ATP-binding proteins (FhuC), a transmembrane protein (FhuB) and a solute-binding protein (FhuD). FhuD interacts with FhuB. Substrate-loaded FhuD binds FhuB more strongly than FhuD alone. Exported by the Tat system. The position of the signal peptide cleavage has been experimentally proven. Can also be exported by the Sec system.

The protein localises to the periplasm. Part of the ABC transporter complex FhuCDB involved in iron(3+)-hydroxamate import. Binds the iron(3+)-hydroxamate complex and transfers it to the membrane-bound permease. Required for the transport of all iron(3+)-hydroxamate siderophores such as ferrichrome, gallichrome, desferrioxamine, coprogen, aerobactin, shizokinen, rhodotorulic acid and the antibiotic albomycin. The protein is Iron(3+)-hydroxamate-binding protein FhuD (fhuD) of Escherichia coli (strain K12).